A 328-amino-acid polypeptide reads, in one-letter code: Twinfilin (328 aa).

The ADF-H 1 domain maps to 1–137 (MSASVELKPT…DYQQIMKSLS (137 aa)). Position 143 is a phosphoserine (Ser143). The region spanning 173-304 (GVAMSIDDKA…TEKEILHAAG (132 aa)) is the ADF-H 2 domain. Residues 302–328 (AAGISSPQAETSTTKTGFSRPRPPRRR) form a disordered region. Residues 306-318 (SSPQAETSTTKTG) show a composition bias toward polar residues.

The protein belongs to the actin-binding proteins ADF family. Twinfilin subfamily. In terms of assembly, interacts with G-actin; ADP-actin form.

Its subcellular location is the cytoplasm. The protein localises to the cytoskeleton. Functionally, actin-binding protein involved in motile and morphological processes. Inhibits actin polymerization, likely by sequestering G-actin. Prevents actin filament assembly by forming a 1:1 complex with actin monomers, and inhibits the nucleotide exchange reaction of actin monomers. This Schizosaccharomyces pombe (strain 972 / ATCC 24843) (Fission yeast) protein is Twinfilin (twf1).